Consider the following 185-residue polypeptide: Ribosome-recycling factor (185 aa).

The protein belongs to the RRF family.

The protein resides in the cytoplasm. Responsible for the release of ribosomes from messenger RNA at the termination of protein biosynthesis. May increase the efficiency of translation by recycling ribosomes from one round of translation to another. In Chloroflexus aurantiacus (strain ATCC 29364 / DSM 637 / Y-400-fl), this protein is Ribosome-recycling factor.